The sequence spans 137 residues: Ribonuclease P protein component (137 aa).

The protein belongs to the RnpA family. In terms of assembly, consists of a catalytic RNA component (M1 or rnpB) and a protein subunit.

It catalyses the reaction Endonucleolytic cleavage of RNA, removing 5'-extranucleotides from tRNA precursor.. In terms of biological role, RNaseP catalyzes the removal of the 5'-leader sequence from pre-tRNA to produce the mature 5'-terminus. It can also cleave other RNA substrates such as 4.5S RNA. The protein component plays an auxiliary but essential role in vivo by binding to the 5'-leader sequence and broadening the substrate specificity of the ribozyme. In Porphyromonas gingivalis (strain ATCC BAA-308 / W83), this protein is Ribonuclease P protein component.